An 80-amino-acid chain; its full sequence is Putative UPF0377 protein YMR324C (80 aa).

Residues 13–33 (ACIFIDSVCEGIVFWGLCLFV) form a helical membrane-spanning segment.

Belongs to the UPF0377 family.

It is found in the membrane. This is Putative UPF0377 protein YMR324C from Saccharomyces cerevisiae (strain ATCC 204508 / S288c) (Baker's yeast).